The following is a 362-amino-acid chain: Peptide chain release factor 1 (362 aa).

At Gln-240 the chain carries N5-methylglutamine.

Belongs to the prokaryotic/mitochondrial release factor family. Methylated by PrmC. Methylation increases the termination efficiency of RF1.

It localises to the cytoplasm. Peptide chain release factor 1 directs the termination of translation in response to the peptide chain termination codons UAG and UAA. This chain is Peptide chain release factor 1, found in Bifidobacterium longum (strain NCC 2705).